A 95-amino-acid chain; its full sequence is MSYELIAAKRVDLGTGASRRLRRAGKLPAVVYGAGKDAVSLELDHNTLYHAVKHADFHTSVLELVIDGQKEQVKVAAFQMHPYKQQVLHIDFARV.

This sequence belongs to the bacterial ribosomal protein bL25 family. Part of the 50S ribosomal subunit; part of the 5S rRNA/L5/L18/L25 subcomplex. Contacts the 5S rRNA. Binds to the 5S rRNA independently of L5 and L18.

Its function is as follows. This is one of the proteins that binds to the 5S RNA in the ribosome where it forms part of the central protuberance. The sequence is that of Large ribosomal subunit protein bL25 from Chromobacterium violaceum (strain ATCC 12472 / DSM 30191 / JCM 1249 / CCUG 213 / NBRC 12614 / NCIMB 9131 / NCTC 9757 / MK).